The chain runs to 301 residues: Ribosomal RNA small subunit methyltransferase H (301 aa).

S-adenosyl-L-methionine contacts are provided by residues 35-37 (GGH), Asp-55, Phe-84, Asp-105, and Gln-112.

The protein belongs to the methyltransferase superfamily. RsmH family.

Its subcellular location is the cytoplasm. It carries out the reaction cytidine(1402) in 16S rRNA + S-adenosyl-L-methionine = N(4)-methylcytidine(1402) in 16S rRNA + S-adenosyl-L-homocysteine + H(+). Its function is as follows. Specifically methylates the N4 position of cytidine in position 1402 (C1402) of 16S rRNA. This chain is Ribosomal RNA small subunit methyltransferase H, found in Chloroflexus aggregans (strain MD-66 / DSM 9485).